The chain runs to 448 residues: DNA repair protein RadA (448 aa).

The C4-type zinc finger occupies cysteine 10–cysteine 27. Residue glycine 96 to serine 103 participates in ATP binding. The RadA KNRFG motif signature appears at lysine 253–glycine 257. The lon-protease-like stretch occupies residues aspartate 351–methionine 448.

It belongs to the RecA family. RadA subfamily.

Its function is as follows. DNA-dependent ATPase involved in processing of recombination intermediates, plays a role in repairing DNA breaks. Stimulates the branch migration of RecA-mediated strand transfer reactions, allowing the 3' invading strand to extend heteroduplex DNA faster. Binds ssDNA in the presence of ADP but not other nucleotides, has ATPase activity that is stimulated by ssDNA and various branched DNA structures, but inhibited by SSB. Does not have RecA's homology-searching function. This chain is DNA repair protein RadA, found in Helicobacter pylori (strain ATCC 700392 / 26695) (Campylobacter pylori).